The following is a 378-amino-acid chain: Dof zinc finger protein 1 (378 aa).

Positions 28-38 (GANPNPAATAP) are enriched in low complexity. The disordered stretch occupies residues 28-79 (GANPNPAATAPSSVTGGALRGGGGGGAPPVAGGAGAGSTERRARPQKEKALN). The span at 45–63 (ALRGGGGGGAPPVAGGAGA) shows a compositional bias: gly residues. A compositionally biased stretch (basic and acidic residues) spans 66 to 77 (TERRARPQKEKA). A Dof-type zinc finger spans residues 78-132 (LNCPRCNSTNTKFCYYNNYSLQQPRYFCKTCRRYWTEGGSLRNVPVGGGSRKNKR). 4 residues coordinate Zn(2+): Cys-80, Cys-83, Cys-105, and Cys-108. Disordered stretches follow at residues 116-148 (GSLRNVPVGGGSRKNKRSSSSAASASPASASTA), 203-222 (SLESSSVCNPGGPMGTNGRG), and 316-378 (LKPT…GTSW). The span at 133–148 (SSSSAASASPASASTA) shows a compositional bias: low complexity. 3 stretches are compositionally biased toward gly residues: residues 323 to 338 (GTGGGGASGGGAGVDG), 350 to 361 (AGGGGGGPGGHD), and 369 to 378 (MIGGGSGTSW).

It localises to the nucleus. Functionally, transcription factor that may transactivate seed storage protein genes in developing seeds. This Oryza sativa subsp. japonica (Rice) protein is Dof zinc finger protein 1.